The chain runs to 326 residues: tRNA-dihydrouridine(16) synthase (326 aa).

FMN is bound by residues 8–10 and glutamine 69; that span reads PME. Cysteine 99 acts as the Proton donor in catalysis. FMN is bound by residues lysine 140, 200-202, and 224-225; these read NGE and GR.

This sequence belongs to the Dus family. DusC subfamily. FMN is required as a cofactor.

The enzyme catalyses 5,6-dihydrouridine(16) in tRNA + NADP(+) = uridine(16) in tRNA + NADPH + H(+). It catalyses the reaction 5,6-dihydrouridine(16) in tRNA + NAD(+) = uridine(16) in tRNA + NADH + H(+). In terms of biological role, catalyzes the synthesis of 5,6-dihydrouridine (D), a modified base found in the D-loop of most tRNAs, via the reduction of the C5-C6 double bond in target uridines. Specifically modifies U16 in tRNAs. This is tRNA-dihydrouridine(16) synthase from Ralstonia nicotianae (strain ATCC BAA-1114 / GMI1000) (Ralstonia solanacearum).